The chain runs to 108 residues: Peptidyl-prolyl cis-trans isomerase FKBP1A (108 aa).

A PPIase FKBP-type domain is found at 20 to 108 (GQTCVVHYTG…IFDVELLKLE (89 aa)). The residue at position 53 (Lys-53) is an N6-acetyllysine; alternate. Lys-53 carries the N6-succinyllysine; alternate modification.

Belongs to the FKBP-type PPIase family. FKBP1 subfamily. In terms of assembly, interacts with TGFBR1; prevents TGFBR1 phosphorylation by TGFBR2 and stabilizes it in the inactive conformation. Interacts with ACVR1B and SMAD7. Identified in a complex composed of RYR1, PDE4D, PKA, FKBP1A and protein phosphatase 1 (PP1). Interacts directly with RYR2 and RYR3. Interacts with GLMN; rapamycin and FK506 abolish the interaction with GLMN in a dose dependent manner. Interacts directly with RYR1.

It is found in the cytoplasm. It localises to the cytosol. The protein resides in the sarcoplasmic reticulum membrane. The enzyme catalyses [protein]-peptidylproline (omega=180) = [protein]-peptidylproline (omega=0). With respect to regulation, inhibited by both FK506 and rapamycin. Functionally, keeps in an inactive conformation TGFBR1, the TGF-beta type I serine/threonine kinase receptor, preventing TGF-beta receptor activation in absence of ligand. May modulate the RYR1 calcium channel activity. PPIases accelerate the folding of proteins. It catalyzes the cis-trans isomerization of proline imidic peptide bonds in oligopeptides. The chain is Peptidyl-prolyl cis-trans isomerase FKBP1A (FKBP1A) from Bos taurus (Bovine).